The primary structure comprises 160 residues: Prostaglandin E synthase 3 (160 aa).

Residues 1–90 (MQPASAKWYD…ESGQSWPRLT (90 aa)) form the CS domain. Lys33 is modified (N6-acetyllysine). Residue Lys35 forms a Glycyl lysine isopeptide (Lys-Gly) (interchain with G-Cter in SUMO2) linkage. Phosphoserine is present on Ser44. Residue Lys65 forms a Glycyl lysine isopeptide (Lys-Gly) (interchain with G-Cter in SUMO2) linkage. Residues Ser85, Ser100, Ser113, and Ser118 each carry the phosphoserine modification. The disordered stretch occupies residues 118–160 (SNFDRFSEMMDHMGGDEDVDLPEVDGADDDSQDSDDEKMPDLE). Basic and acidic residues predominate over residues 122 to 132 (RFSEMMDHMGG). The segment covering 133 to 153 (DEDVDLPEVDGADDDSQDSDD) has biased composition (acidic residues). Ser148 and Ser151 each carry phosphoserine. A PXLE motif motif is present at residues 157–160 (PDLE).

It belongs to the p23/wos2 family. Probably forms a complex composed of chaperones HSP90 and HSP70, co-chaperones STIP1/HOP, CDC37, PPP5C, PTGES3/p23, TSC1 and client protein TSC2. Binds to the progesterone receptor. Interacts with TERT; the interaction, together with HSP90AA1, is required for correct assembly and stabilization of the telomerase holoenzyme complex. Interacts (via PXLE motif) with EGLN1/PHD2, recruiting EGLN1/PHD2 to the HSP90 pathway to facilitate HIF alpha proteins hydroxylation. Interacts with HSP90AA1, FLCN, FNIP1 and FNIP2. In terms of processing, proteolytically cleaved by caspase-7 (CASP7) in response to apoptosis, leading to its inactivation. In terms of tissue distribution, expressed in testis, kidney, bladder and ovary.

It is found in the cytoplasm. The catalysed reaction is prostaglandin H2 = prostaglandin E2. Its pathway is lipid metabolism; prostaglandin biosynthesis. In terms of biological role, cytosolic prostaglandin synthase that catalyzes the oxidoreduction of prostaglandin endoperoxide H2 (PGH2) to prostaglandin E2 (PGE2). Molecular chaperone that localizes to genomic response elements in a hormone-dependent manner and disrupts receptor-mediated transcriptional activation, by promoting disassembly of transcriptional regulatory complexes. Facilitates HIF alpha proteins hydroxylation via interaction with EGLN1/PHD2, leading to recruit EGLN1/PHD2 to the HSP90 pathway. This is Prostaglandin E synthase 3 (Ptges3) from Mus musculus (Mouse).